A 71-amino-acid polypeptide reads, in one-letter code: Virion membrane protein A13 homolog (71 aa).

The chain crosses the membrane as a helical span at residues 1–21; sequence MGIIDTFVITAVTVIIFCLLI. Residues 22 to 70 lie on the Virion surface side of the membrane; that stretch reads YAAYKRYKCIPSPDDRDKVLKSTLNDDTLFNQTLTPDQVKALHRLVTSS.

This sequence belongs to the chordopoxvirinae A13 family.

Its subcellular location is the virion membrane. Its function is as follows. Essential for the encapsidation of DNA into immature virions (IV) and the subsequent maturation of IV into mature virions (MV). The protein is Virion membrane protein A13 homolog of Vertebrata (FPV).